We begin with the raw amino-acid sequence, 108 residues long: uncharacterized protein (108 aa).

Positions 1–20 (MNLKSIIFVLFIAFFAFSLA) are cleaved as a signal peptide. Residue Asn39 is glycosylated (N-linked (GlcNAc...) asparagine).

Belongs to the Dictyostelium gerABC family.

It localises to the secreted. This is an uncharacterized protein from Dictyostelium discoideum (Social amoeba).